Here is a 235-residue protein sequence, read N- to C-terminus: MSIEVVEVKPHERHYGVYVVKFEDGTERIATKNLTPGRRVYGERLIKWGGDEYREWNPYRSKLAAAILNGLKLVPIKEGTHILYLGAASGTTPSHISDIVGENGLIYSVEFSPRVFREFMEKLVDQGRRNVVPILGDARFPYQYAHYVKGVDVVYIDVAQPAQAKILADNADYFLKPGGHVMLVIKAMSIDVTAPATETFKQEINTLKERGFDILETVHLEPYDTAHAMVIAKKR.

Residues 91-92, 110-111, 137-138, and 157-160 contribute to the S-adenosyl-L-methionine site; these read TT, EF, DA, and DVAQ.

It belongs to the methyltransferase superfamily. Fibrillarin family. In terms of assembly, interacts with nop5. Component of box C/D small ribonucleoprotein (sRNP) particles that contain rpl7ae, FlpA and nop5, plus a guide RNA.

In terms of biological role, involved in pre-rRNA and tRNA processing. Utilizes the methyl donor S-adenosyl-L-methionine to catalyze the site-specific 2'-hydroxyl methylation of ribose moieties in rRNA and tRNA. Site specificity is provided by a guide RNA that base pairs with the substrate. Methylation occurs at a characteristic distance from the sequence involved in base pairing with the guide RNA. The protein is Fibrillarin-like rRNA/tRNA 2'-O-methyltransferase of Pyrobaculum aerophilum (strain ATCC 51768 / DSM 7523 / JCM 9630 / CIP 104966 / NBRC 100827 / IM2).